The chain runs to 352 residues: Cuticle collagen dpy-17 (352 aa).

Residues 1–29 (MSVFAGYAACTLGAVSMLLCVSLVPQVYQ) form the signal peptide. The furin-like endopeptidase recognition region stretch occupies residues 61-64 (RVRR). Disordered stretches follow at residues 73-143 (GGYG…GPGD) and 156-352 (GPAG…GYRN). A compositionally biased stretch (gly residues) spans 87–97 (GPHGGFPGGPQ). 4 triple-helical region regions span residues 156–182 (GPAGPKGTPGHDGPDGIPGVPGVDGED), 202–264 (GPQG…DVEH), 267–290 (GLPGAKGTPGAPGESGDQGEQGDR), and 294–329 (GIAGPPGERGPQGEKGDDGPNGAAGSPGEEGEPGQD). One can recognise a Collagen-like domain in the interval 202–259 (GPQGPPGSQGKPGARGMRGARGQAAMPGRDGSPGMPGSLGPIGPPGAAGEEGPTGEPG). Residues 207-259 (PGSQGKPGARGMRGARGQAAMPGRDGSPGMPGSLGPIGPPGAAGEEGPTGEPG) show a composition bias toward low complexity. The span at 337–352 (QRNTNAAVSGNQGYRN) shows a compositional bias: polar residues.

The protein belongs to the cuticular collagen family. In terms of assembly, collagen polypeptide chains are complexed within the cuticle by disulfide bonds and other types of covalent cross-links.

The protein resides in the secreted. The protein localises to the extracellular space. In terms of biological role, secreted collagen that forms part of the nematode cuticle, which functions as an exoskeleton and a barrier to protect the worm from its environment. Secretion and subsequent incorporation into the cuticle is likely mediated by bli-4, which probably cleaves at the N-terminal consensus furin cleavage site. In Caenorhabditis elegans, this protein is Cuticle collagen dpy-17.